The following is a 202-amino-acid chain: Large ribosomal subunit protein uL13 (202 aa).

This sequence belongs to the universal ribosomal protein uL13 family. As to quaternary structure, component of the large ribosomal subunit (LSU). Mature N.crassa ribosomes consist of a small (40S) and a large (60S) subunit. The 40S small subunit contains 1 molecule of ribosomal RNA (18S rRNA) and at least 32 different proteins. The large 60S subunit contains 3 rRNA molecules (26S, 5.8S and 5S rRNA) and at least 42 different proteins.

It is found in the cytoplasm. Its function is as follows. Component of the ribosome, a large ribonucleoprotein complex responsible for the synthesis of proteins in the cell. The small ribosomal subunit (SSU) binds messenger RNAs (mRNAs) and translates the encoded message by selecting cognate aminoacyl-transfer RNA (tRNA) molecules. The large subunit (LSU) contains the ribosomal catalytic site termed the peptidyl transferase center (PTC), which catalyzes the formation of peptide bonds, thereby polymerizing the amino acids delivered by tRNAs into a polypeptide chain. The nascent polypeptides leave the ribosome through a tunnel in the LSU and interact with protein factors that function in enzymatic processing, targeting, and the membrane insertion of nascent chains at the exit of the ribosomal tunnel. The sequence is that of Large ribosomal subunit protein uL13 (crp-46) from Neurospora crassa (strain ATCC 24698 / 74-OR23-1A / CBS 708.71 / DSM 1257 / FGSC 987).